Here is a 310-residue protein sequence, read N- to C-terminus: Homeobox protein dsc-1 (310 aa).

Residues 180-239 (RRRFRTNFTELQSTFLEDSFKESHYPDHKAKKYMADFLKIPEDRITVWFQNRRAKWRRKE) constitute a DNA-binding region (homeobox). The interval 262-310 (CFSAQHPDDGPNAKHPNSFGIPNQPMSLDQFPMNTEQDFPEFPSLQEHQ) is disordered. Over residues 281 to 298 (GIPNQPMSLDQFPMNTEQ) the composition is skewed to polar residues.

In terms of tissue distribution, expressed in the bilateral sensory neurons AWA, AWB, AWC, ASE, FLP and PVD. Also expressed in the enteric intestinal and anal depressor muscles.

It is found in the nucleus. The protein localises to the cell projection. Its subcellular location is the axon. It localises to the cytoplasm. In terms of biological role, transcriptional regulator which plays a role in the expulsion step of defecation by controlling enteric muscle-specific expression of exp-1 which is required for enteric muscle contraction. Not required for exp-1 expression in the PDA neuron. Also involved in controlling the length of the defecation cycle. The chain is Homeobox protein dsc-1 from Caenorhabditis elegans.